The following is a 137-amino-acid chain: Structural protein A137R (137 aa).

The protein belongs to the asfivirus A137R family. In terms of assembly, interacts with host TBK1.

Its subcellular location is the virion. The protein localises to the host cytoplasm. Plays a role in the inhibition of the host innate immune response. Mechanistically, promotes the autophagy-mediated lysosomal degradation of host TBK1 and affects IRF3 nuclear translocation to block type I IFN production. This chain is Structural protein A137R, found in Ornithodoros (relapsing fever ticks).